We begin with the raw amino-acid sequence, 435 residues long: MKTAYVSATIVTLNEQNEVFENGYIIVEDHTIIEVQHGDFFKHDQVDEVVDLKGKWLLPGLVNTHTHIVMSLLRGIGDDMLLQPWLETRIWPLERQFTPELAVASTELGLLEMVKSGTTTFSDMFNPIGIDQDAIMETVRNSGMRAAVSRTLFSFGTKEDEKKAIQEAEKYVKRYYREHDMLTTMVAPHSPYTCSTEMLEECARIAMENNTMVHIHLSETEREVQDIEKQYGKRPVEYIESCGLFKRPTVIAHGVVLNENERTFLAEHDVRVAHNPNSNLKLGSGIANVKAMLEAGIKVGIATDSVASNNNLDMFEEMRIATLLQKGIHQDATALPVETALSLATKGAAEVIGMKQTGSIERGKCADFITIDPAKKPHLQPAEEVLSHLVYAASGKDVSDVVINGKQIMWNGECKTLDEERIIFEARRYKHGLQM.

Residues His65 and His67 each coordinate Zn(2+). The substrate site is built by Glu94, Arg150, and His189. His216 serves as a coordination point for Zn(2+). The substrate site is built by Glu219 and Asp304. A Zn(2+)-binding site is contributed by Asp304.

Belongs to the metallo-dependent hydrolases superfamily. MTA/SAH deaminase family. Zn(2+) is required as a cofactor.

It carries out the reaction S-adenosyl-L-homocysteine + H2O + H(+) = S-inosyl-L-homocysteine + NH4(+). The catalysed reaction is S-methyl-5'-thioadenosine + H2O + H(+) = S-methyl-5'-thioinosine + NH4(+). Its function is as follows. Catalyzes the deamination of 5-methylthioadenosine and S-adenosyl-L-homocysteine into 5-methylthioinosine and S-inosyl-L-homocysteine, respectively. Is also able to deaminate adenosine. This is 5-methylthioadenosine/S-adenosylhomocysteine deaminase from Bacillus cytotoxicus (strain DSM 22905 / CIP 110041 / 391-98 / NVH 391-98).